We begin with the raw amino-acid sequence, 100 residues long: UPF0213 protein YhbQ (100 aa).

The 76-residue stretch at 2–77 (TPWYLYLIRT…KQLTKRQKER (76 aa)) folds into the GIY-YIG domain.

It belongs to the UPF0213 family.

The polypeptide is UPF0213 protein YhbQ (Salmonella arizonae (strain ATCC BAA-731 / CDC346-86 / RSK2980)).